The sequence spans 28 residues: Humanin-like 4 (28 aa).

The protein belongs to the humanin family. In terms of tissue distribution, highly expressed in testis. Also expressed in kidney, heart, skeletal muscles and brain.

It is found in the secreted. The protein localises to the cytoplasm. Plays a role as a neuroprotective and antiapoptotic factor. This is Humanin-like 4 from Homo sapiens (Human).